The chain runs to 760 residues: Catalase-peroxidase (760 aa).

Positions 1–22 (MSQGECPVKKVPNVAGSGTRNT) are disordered. The tryptophyl-tyrosyl-methioninium (Trp-Tyr) (with M-268) cross-link spans 93–242 (WHSAGTYRVT…LAAAHMGLIY (150 aa)). Residue His94 is the Proton acceptor of the active site. Residues 206 to 226 (KGEGIMDGDQHKTDKSEPHTS) form a disordered region. The span at 213–226 (GDQHKTDKSEPHTS) shows a compositional bias: basic and acidic residues. A cross-link (tryptophyl-tyrosyl-methioninium (Tyr-Met) (with W-93)) is located at residues 242-268 (YVNPEGPEGIPDPVAAAHDIRTTFGRM). His283 serves as a coordination point for heme b.

This sequence belongs to the peroxidase family. Peroxidase/catalase subfamily. As to quaternary structure, homodimer or homotetramer. Requires heme b as cofactor. Post-translationally, formation of the three residue Trp-Tyr-Met cross-link is important for the catalase, but not the peroxidase activity of the enzyme.

It localises to the cytoplasm. It catalyses the reaction H2O2 + AH2 = A + 2 H2O. It carries out the reaction 2 H2O2 = O2 + 2 H2O. In terms of biological role, bifunctional enzyme with both catalase and broad-spectrum peroxidase activity. In Pyrenophora tritici-repentis (strain Pt-1C-BFP) (Wheat tan spot fungus), this protein is Catalase-peroxidase.